We begin with the raw amino-acid sequence, 297 residues long: 4-diphosphocytidyl-2-C-methyl-D-erythritol kinase (297 aa).

Lys22 is an active-site residue. Residue 111–121 (PSQAGMGGGSS) participates in ATP binding. Asp153 is a catalytic residue.

The protein belongs to the GHMP kinase family. IspE subfamily.

The enzyme catalyses 4-CDP-2-C-methyl-D-erythritol + ATP = 4-CDP-2-C-methyl-D-erythritol 2-phosphate + ADP + H(+). Its pathway is isoprenoid biosynthesis; isopentenyl diphosphate biosynthesis via DXP pathway; isopentenyl diphosphate from 1-deoxy-D-xylulose 5-phosphate: step 3/6. Functionally, catalyzes the phosphorylation of the position 2 hydroxy group of 4-diphosphocytidyl-2C-methyl-D-erythritol. This is 4-diphosphocytidyl-2-C-methyl-D-erythritol kinase from Polaromonas naphthalenivorans (strain CJ2).